Consider the following 467-residue polypeptide: Serum response factor homolog B (467 aa).

A compositionally biased stretch (polar residues) spans 1 to 15 (MELNMNQYDNIESND). 3 disordered regions span residues 1–38 (MELN…KSGR), 115–245 (NTPD…NNLT), and 301–467 (IQNI…PSDL). Positions 36–96 (SGRRKINIEF…GHVYTFATPK (61 aa)) constitute an MADS-box domain. Over residues 128–205 (NNNNGNNSNN…NNNNNNNNNN (78 aa)) the composition is skewed to low complexity. The span at 206–220 (CKEEQNMNIPNERKS) shows a compositional bias: basic and acidic residues. Composition is skewed to low complexity over residues 222-245 (NNIN…NNLT), 301-334 (IQNI…SNNI), 347-392 (GSNS…NSNN), and 401-440 (PSPI…YGGY). Residues 442-467 (QPFSRNYPLQSNIATNSTVSKAPSDL) are compositionally biased toward polar residues.

The protein localises to the nucleus. This chain is Serum response factor homolog B (srfB), found in Dictyostelium discoideum (Social amoeba).